We begin with the raw amino-acid sequence, 181 residues long: SRP-independent targeting protein 2 (181 aa).

Topologically, residues 1-15 (MAGKAGRKQASSNAK) are cytoplasmic. A helical membrane pass occupies residues 16–36 (IIQGLYKQVSLFLGMAIVRLF). The Lumenal segment spans residues 37–45 (ISRKVTIGQ). A helical membrane pass occupies residues 46-66 (WIKLVALNVPMFVALYIIVLS). At 67-89 (GKPKYDGNRVVKQGIDLNDNTNL) the chain is on the cytoplasmic side. A helical membrane pass occupies residues 90–110 (ISYFFDLIYLSLFGNIGIIAF). Residues 111 to 112 (RT) lie on the Lumenal side of the membrane. Residues 113 to 133 (FKFWWCLLLCPIYAGYKLYGL) traverse the membrane as a helical segment. At 134–181 (KNMFMPGAQQTQADNRSKNANEGQSKSKRQMKRERRGETDSKIKYKYR) the chain is on the cytoplasmic side. Polar residues predominate over residues 144 to 157 (TQADNRSKNANEGQ). Positions 144 to 181 (TQADNRSKNANEGQSKSKRQMKRERRGETDSKIKYKYR) are disordered. Positions 168-181 (RRGETDSKIKYKYR) are enriched in basic and acidic residues.

It belongs to the TMEM208 family. In terms of assembly, interacts with SND1, PHO88/SND3 and the translocon complex subunit SEC61. ENV10/SND2 and PHO88/SND3 form a complex with the translocon in the endoplasmic reticulum membrane.

Its subcellular location is the endoplasmic reticulum membrane. Functionally, functions in the SND pathway, a SRP (signal recognition particle) and GET (guided entry of tail-anchored proteins) independent pathway for targeting a broad range of substrate proteins to the endoplasmic reticulum. SND functions in parallel to GET in targeting proteins with downstream hydrophobic motifs. Involved in vacuolar processing and morphology. This chain is SRP-independent targeting protein 2, found in Saccharomyces cerevisiae (strain ATCC 204508 / S288c) (Baker's yeast).